An 89-amino-acid polypeptide reads, in one-letter code: Small ribosomal subunit protein uS14A (89 aa).

It belongs to the universal ribosomal protein uS14 family. In terms of assembly, part of the 30S ribosomal subunit. Contacts proteins S3 and S10.

Functionally, binds 16S rRNA, required for the assembly of 30S particles and may also be responsible for determining the conformation of the 16S rRNA at the A site. The chain is Small ribosomal subunit protein uS14A from Listeria innocua serovar 6a (strain ATCC BAA-680 / CLIP 11262).